Consider the following 94-residue polypeptide: Integration host factor subunit beta (94 aa).

Belongs to the bacterial histone-like protein family. In terms of assembly, heterodimer of an alpha and a beta chain.

In terms of biological role, this protein is one of the two subunits of integration host factor, a specific DNA-binding protein that functions in genetic recombination as well as in transcriptional and translational control. This Aeromonas hydrophila subsp. hydrophila (strain ATCC 7966 / DSM 30187 / BCRC 13018 / CCUG 14551 / JCM 1027 / KCTC 2358 / NCIMB 9240 / NCTC 8049) protein is Integration host factor subunit beta.